A 221-amino-acid polypeptide reads, in one-letter code: Deoxyribose-phosphate aldolase 1 (221 aa).

Asp-89 (proton donor/acceptor) is an active-site residue. Lys-152 acts as the Schiff-base intermediate with acetaldehyde in catalysis. Catalysis depends on Lys-181, which acts as the Proton donor/acceptor.

It belongs to the DeoC/FbaB aldolase family. DeoC type 1 subfamily.

The protein resides in the cytoplasm. It catalyses the reaction 2-deoxy-D-ribose 5-phosphate = D-glyceraldehyde 3-phosphate + acetaldehyde. It functions in the pathway carbohydrate degradation; 2-deoxy-D-ribose 1-phosphate degradation; D-glyceraldehyde 3-phosphate and acetaldehyde from 2-deoxy-alpha-D-ribose 1-phosphate: step 2/2. Functionally, catalyzes a reversible aldol reaction between acetaldehyde and D-glyceraldehyde 3-phosphate to generate 2-deoxy-D-ribose 5-phosphate. The sequence is that of Deoxyribose-phosphate aldolase 1 from Oceanobacillus iheyensis (strain DSM 14371 / CIP 107618 / JCM 11309 / KCTC 3954 / HTE831).